The primary structure comprises 287 residues: MHLARTLPTLQQAVHQLRHAGKRIAFVPTMGALHEGHQSLVRAAIAQDYAVVTSVFVNPTQFGPSEDLARYPRDEKGDIAILERTGCSIAWLPDVDTMYPPGDATGFVMGGPALGWEGARRPGHFNGVAQVVAKLFGQVRPDAAFFGEKDWQQLQVIRRLTADLLLPVAIHGVPTQREEDGLAMSSRNRFLSPEERAIAPLLFRTLLQAGHALSSSPDAEEICKNAIAALNGQGFDVDYFALIEGSSLSSIAILPEGDDWRLITAARLGSVRLLDNLGRAELARFRA.

30–37 (MGALHEGH) is a binding site for ATP. His37 acts as the Proton donor in catalysis. A (R)-pantoate-binding site is contributed by Gln61. Gln61 provides a ligand contact to beta-alanine. An ATP-binding site is contributed by 147-150 (GEKD). Gln153 serves as a coordination point for (R)-pantoate. 184–187 (MSSR) contacts ATP.

It belongs to the pantothenate synthetase family. Homodimer.

It localises to the cytoplasm. The catalysed reaction is (R)-pantoate + beta-alanine + ATP = (R)-pantothenate + AMP + diphosphate + H(+). The protein operates within cofactor biosynthesis; (R)-pantothenate biosynthesis; (R)-pantothenate from (R)-pantoate and beta-alanine: step 1/1. Its function is as follows. Catalyzes the condensation of pantoate with beta-alanine in an ATP-dependent reaction via a pantoyl-adenylate intermediate. The chain is Pantothenate synthetase from Granulibacter bethesdensis (strain ATCC BAA-1260 / CGDNIH1).